The chain runs to 236 residues: Purine nucleoside phosphorylase DeoD-type 2 (236 aa).

His5 contacts a purine D-ribonucleoside. Phosphate-binding positions include Gly21, Arg25, Arg44, and 88–91 (RVGS). Residues 180–182 (DME) and 204–205 (SD) contribute to the a purine D-ribonucleoside site. The active-site Proton donor is Asp205.

This sequence belongs to the PNP/UDP phosphorylase family. In terms of assembly, homohexamer; trimer of homodimers.

The catalysed reaction is a purine D-ribonucleoside + phosphate = a purine nucleobase + alpha-D-ribose 1-phosphate. It catalyses the reaction a purine 2'-deoxy-D-ribonucleoside + phosphate = a purine nucleobase + 2-deoxy-alpha-D-ribose 1-phosphate. Functionally, catalyzes the reversible phosphorolytic breakdown of the N-glycosidic bond in the beta-(deoxy)ribonucleoside molecules, with the formation of the corresponding free purine bases and pentose-1-phosphate. This chain is Purine nucleoside phosphorylase DeoD-type 2, found in Aliivibrio fischeri (strain ATCC 700601 / ES114) (Vibrio fischeri).